The chain runs to 404 residues: Rhomboid-related protein 3 (404 aa).

EF-hand domains follow at residues 34–69 (APEDHWKVLFDQFDPGNTGYISTGKFRSLLESHSSK) and 70–105 (LDPHKREVLLALADSHADGQIGYQDFVSLMSNKRSN). The next 7 membrane-spanning stretches (helical) occupy residues 164–184 (WFMITVTLLEVAFFLYNGVSL), 218–238 (IFMHAGIEHLGLNVVLQLLVG), 250–270 (IGLVYVAGVVAGSLAVSVADM), 274–294 (VVGSSGGVYALVSAHLANIVM), 303–325 (FKLLRMAVALICMSMEFGRAVWL), 338–358 (PSFVAHLGGVAVGITLGVVVL), and 371–391 (WWIFVAMYTVFVLFAVFWNIF). Serine 278 functions as the Nucleophile in the catalytic mechanism. Residue histidine 343 is part of the active site.

It belongs to the peptidase S54 family.

Its subcellular location is the membrane. It carries out the reaction Cleaves type-1 transmembrane domains using a catalytic dyad composed of serine and histidine that are contributed by different transmembrane domains.. In terms of biological role, may be involved in regulated intramembrane proteolysis and the subsequent release of functional polypeptides from their membrane anchors. The chain is Rhomboid-related protein 3 (RHBDL3) from Homo sapiens (Human).